The following is a 75-amino-acid chain: Small ribosomal subunit protein bS18 (75 aa).

Residues 1–11 (MAAKPFFRRRK) are compositionally biased toward basic residues. The disordered stretch occupies residues 1 to 21 (MAAKPFFRRRKTDPFEGENAP).

Belongs to the bacterial ribosomal protein bS18 family. As to quaternary structure, part of the 30S ribosomal subunit. Forms a tight heterodimer with protein bS6.

Functionally, binds as a heterodimer with protein bS6 to the central domain of the 16S rRNA, where it helps stabilize the platform of the 30S subunit. This is Small ribosomal subunit protein bS18 from Jannaschia sp. (strain CCS1).